We begin with the raw amino-acid sequence, 563 residues long: MTKQQTSVMRNASIAKEEREGSDNNNVDRSSSDAISDNDAERSNSHSEIDNESNFDMVPYSRFSHKQKMLLVVQCAFTGFFSTVAGSIYYPVLTIIERKFNITEELANVTIVVYFIFQGVAPSIMGGLADTFGRRPIVLWAILAYFCACIGLACAHNYAQILALRCLQAAGISPVIAINSGIMGDVTTKVERGGYVGLVAGFQVVGTAFGALIGAGLSSKWGWRAIFWFLAIGSGICLVFSTLLMPETKRTLVGNGSVTPRSFLNRSLILHVGSVKKTLHLDDPDPETLEPRTSVDFLAPLKILHIREIDILLSIAGLQFSTWTTHQTALTIVLSKKYNLSVAKIGLCFLPAGISTLTSIISAGRYLNWSYRTRKVKYNRWIKEQELQLMEKYKGDKNKVAELIHSNSHYAFNLVEARLHPAFVTLLLSSIGFTAFGWCISVKTPLAAVLCTSAFASLFSNCILTFSTTLIVDLFPSKASTATGCLNLFRCLLSAIFIAALTKMVEKMRYGGVFTFLSAITSSSSLLLFYLLKNGKQLSFDRIRANDKSAGRSVGKNSEKVST.

The segment covering 1–10 has biased composition (polar residues); that stretch reads MTKQQTSVMR. The disordered stretch occupies residues 1 to 50; the sequence is MTKQQTSVMRNASIAKEEREGSDNNNVDRSSSDAISDNDAERSNSHSEID. Residues 1-75 are Cytoplasmic-facing; the sequence is MTKQQTSVMR…KQKMLLVVQC (75 aa). Residues 23–33 are compositionally biased toward low complexity; the sequence is DNNNVDRSSSD. Residues 39–49 are compositionally biased toward basic and acidic residues; that stretch reads DAERSNSHSEI. The helical transmembrane segment at 76–96 threads the bilayer; that stretch reads AFTGFFSTVAGSIYYPVLTII. Residues 97 to 108 are Extracellular-facing; sequence ERKFNITEELAN. A helical transmembrane segment spans residues 109-129; it reads VTIVVYFIFQGVAPSIMGGLA. Over 130–135 the chain is Cytoplasmic; the sequence is DTFGRR. The helical transmembrane segment at 136-156 threads the bilayer; it reads PIVLWAILAYFCACIGLACAH. Residues 157 to 165 are Extracellular-facing; the sequence is NYAQILALR. The chain crosses the membrane as a helical span at residues 166-186; sequence CLQAAGISPVIAINSGIMGDV. At 187–195 the chain is on the cytoplasmic side; the sequence is TTKVERGGY. Residues 196–216 form a helical membrane-spanning segment; sequence VGLVAGFQVVGTAFGALIGAG. Residues 217-224 are Extracellular-facing; sequence LSSKWGWR. The chain crosses the membrane as a helical span at residues 225 to 245; that stretch reads AIFWFLAIGSGICLVFSTLLM. Residues 246-296 are Cytoplasmic-facing; sequence PETKRTLVGNGSVTPRSFLNRSLILHVGSVKKTLHLDDPDPETLEPRTSVD. Residues 297 to 317 form a helical membrane-spanning segment; sequence FLAPLKILHIREIDILLSIAG. Residues 318 to 341 lie on the Extracellular side of the membrane; that stretch reads LQFSTWTTHQTALTIVLSKKYNLS. Residues 342-362 form a helical membrane-spanning segment; the sequence is VAKIGLCFLPAGISTLTSIIS. Residues 363–421 are Cytoplasmic-facing; that stretch reads AGRYLNWSYRTRKVKYNRWIKEQELQLMEKYKGDKNKVAELIHSNSHYAFNLVEARLHP. The helical transmembrane segment at 422 to 442 threads the bilayer; the sequence is AFVTLLLSSIGFTAFGWCISV. The Extracellular portion of the chain corresponds to 443-445; the sequence is KTP. Residues 446-466 traverse the membrane as a helical segment; that stretch reads LAAVLCTSAFASLFSNCILTF. Residues 467-481 lie on the Cytoplasmic side of the membrane; that stretch reads STTLIVDLFPSKAST. A helical transmembrane segment spans residues 482–502; the sequence is ATGCLNLFRCLLSAIFIAALT. The Extracellular portion of the chain corresponds to 503–511; the sequence is KMVEKMRYG. Residues 512-532 form a helical membrane-spanning segment; the sequence is GVFTFLSAITSSSSLLLFYLL. Over 533-563 the chain is Cytoplasmic; the sequence is KNGKQLSFDRIRANDKSAGRSVGKNSEKVST.

Belongs to the major facilitator superfamily. CAR1 family.

The protein resides in the cell membrane. Multidrug resistance transporter involved in resistance and adaptation to quinidine and ketoconazole. The polypeptide is Quinidine resistance protein 1 (QDR1) (Saccharomyces cerevisiae (strain ATCC 204508 / S288c) (Baker's yeast)).